Reading from the N-terminus, the 109-residue chain is Aquaporin-2 (109 aa).

Residues 1–6 (SIAFSR) are Cytoplasmic-facing. A helical membrane pass occupies residues 7-27 (AVFTEFLATLLFVFFGLGSAL). The Extracellular portion of the chain corresponds to 28 to 35 (NWPQALPS). A helical transmembrane segment spans residues 36-54 (VLQIAMAFGLAIGTLVQML). The Cytoplasmic portion of the chain corresponds to 55–59 (GHISG). An intramembrane region (discontinuously helical) is located at residues 60–69 (AHINPAVTVA). An NPA 1 motif is present at residues 63–65 (NPA). The Cytoplasmic portion of the chain corresponds to 70-80 (CLVGCHISFLR). Residues 81 to 102 (AAFYVAAQLLGAVAGAALLHEV) form a helical membrane-spanning segment. Residues 103 to 109 (TPPSIRG) are Extracellular-facing.

It belongs to the MIP/aquaporin (TC 1.A.8) family. As to quaternary structure, homotetramer. Post-translationally, serine phosphorylation is necessary and sufficient for expression at the apical membrane. Endocytosis is not phosphorylation-dependent. In terms of processing, N-glycosylated.

Its subcellular location is the apical cell membrane. It localises to the basolateral cell membrane. It is found in the cell membrane. The protein resides in the cytoplasmic vesicle membrane. The protein localises to the golgi apparatus. Its subcellular location is the trans-Golgi network membrane. It carries out the reaction H2O(in) = H2O(out). The enzyme catalyses glycerol(in) = glycerol(out). Its function is as follows. Forms a water-specific channel that provides the plasma membranes of renal collecting duct with high permeability to water, thereby permitting water to move in the direction of an osmotic gradient. Plays an essential role in renal water homeostasis. Could also be permeable to glycerol. The protein is Aquaporin-2 of Erinaceus europaeus (Western European hedgehog).